Consider the following 348-residue polypeptide: Dihydroorotase (348 aa).

Zn(2+)-binding residues include H14 and H16. Residues 16-18 (HLR) and N42 each bind substrate. The Zn(2+) site is built by K100, H137, and H175. K100 carries the post-translational modification N6-carboxylysine. H137 contributes to the substrate binding site. L220 is a binding site for substrate. Residue D248 coordinates Zn(2+). Residue D248 is part of the active site. H252 and A264 together coordinate substrate.

Belongs to the metallo-dependent hydrolases superfamily. DHOase family. Class II DHOase subfamily. As to quaternary structure, homodimer. It depends on Zn(2+) as a cofactor.

It catalyses the reaction (S)-dihydroorotate + H2O = N-carbamoyl-L-aspartate + H(+). It functions in the pathway pyrimidine metabolism; UMP biosynthesis via de novo pathway; (S)-dihydroorotate from bicarbonate: step 3/3. Its function is as follows. Catalyzes the reversible cyclization of carbamoyl aspartate to dihydroorotate. This is Dihydroorotase from Azotobacter vinelandii (strain DJ / ATCC BAA-1303).